The chain runs to 242 residues: Exosome complex component ski6 (242 aa).

Belongs to the RNase PH family. In terms of assembly, component of the RNA exosome complex. Specifically part of the catalytically inactive RNA exosome core complex (Exo-9) which may associate with the catalytic subunits rrp6 and dis3 in cytoplasmic- and nuclear-specific RNA exosome complex forms. Exo-9 is formed by a hexameric base ring of RNase PH domain-containing subunits and a cap ring consisting of csl4, rrp4 and rrp40.

It localises to the cytoplasm. It is found in the nucleus. The protein resides in the nucleolus. Its function is as follows. Non-catalytic component of the RNA exosome complex which has 3'-&gt;5' exoribonuclease activity and participates in a multitude of cellular RNA processing and degradation events. In the nucleus, the RNA exosome complex is involved in proper maturation of stable RNA species such as rRNA, snRNA and snoRNA, in the elimination of RNA processing by-products and non-coding 'pervasive' transcripts, such as antisense RNA species and cryptic unstable transcripts (CUTs), and of mRNAs with processing defects, thereby limiting or excluding their export to the cytoplasm. In the cytoplasm, the RNA exosome complex is involved in general mRNA turnover and in RNA surveillance pathways, preventing translation of aberrant mRNAs. The catalytic inactive RNA exosome core complex of 9 subunits (Exo-9) is proposed to play a pivotal role in the binding and presentation of RNA for ribonucleolysis, and to serve as a scaffold for the association with catalytic subunits and accessory proteins or complexes. ski6 is part of the hexameric ring of RNase PH domain-containing subunits proposed to form a central channel which threads RNA substrates for degradation. The protein is Exosome complex component ski6 (ski6) of Schizosaccharomyces pombe (strain 972 / ATCC 24843) (Fission yeast).